We begin with the raw amino-acid sequence, 130 residues long: MAAPVKKTGSKKSKKNVPNGVVHIQSTFNNTIVSISDTSGHVISWSSAGASGFKGARKGTPFAAQTAAEAAAKRALDQGMRQIEVLVRGPGSGRETAIRALQVAGLEITLIRDVTPLPHNGCRRPKRRRV.

It belongs to the universal ribosomal protein uS11 family. In terms of assembly, part of the 30S ribosomal subunit. Interacts with proteins S7 and S18. Binds to IF-3.

Functionally, located on the platform of the 30S subunit, it bridges several disparate RNA helices of the 16S rRNA. Forms part of the Shine-Dalgarno cleft in the 70S ribosome. The sequence is that of Small ribosomal subunit protein uS11 from Prochlorococcus marinus (strain MIT 9515).